An 87-amino-acid chain; its full sequence is Apolipoprotein C-I (87 aa).

The first 26 residues, Met1–Ala26, serve as a signal peptide directing secretion.

It belongs to the apolipoprotein C1 family.

It is found in the secreted. Functionally, inhibitor of lipoprotein binding to the low density lipoprotein (LDL) receptor, LDL receptor-related protein, and very low density lipoprotein (VLDL) receptor. Associates with high density lipoproteins (HDL) and the triacylglycerol-rich lipoproteins in the plasma and makes up about 10% of the protein of the VLDL and 2% of that of HDL. Appears to interfere directly with fatty acid uptake and is also the major plasma inhibitor of cholesteryl ester transfer protein (CETP). Binds free fatty acids and reduces their intracellular esterification. Modulates the interaction of APOE with beta-migrating VLDL and inhibits binding of beta-VLDL to the LDL receptor-related protein. In Pteropus vampyrus (Large flying fox), this protein is Apolipoprotein C-I (APOC1).